A 1454-amino-acid chain; its full sequence is MYGYLRETDDSTAINFSAYGKFLPGENTGFQLLTIGAKFIRIFRVNPYVLKEPGEDNEEWQQKTKLECMFSCRLLNKCHSIAVARVPQLPDQDSILMTFDDAKLSIVSINEKERNMQTISLHAFENEYLRDGFINHFQPPLVRSDPSNRCAACLVYGKHIAILPFHENSKRIHSYVIPLKQIDPRLDNIADMVFLDGYYEPTILFLYEPIQTTPGRACVRYDTMCIMGVSVNIVDRQFAVVWQTANLPMDCSQLLPIPKPLGGALVFGSNTVVYLNQAVPPCGLVLNSCYDGFTKFPLKDLKHLKMTLDCSTSVYMEDGRIAVGSRDGDLFLLRLMTSSGGGTVKSLEFSKVYETSIAYSLTVCAPGHLFVGSRLGDSQLLEYTLLKTTRDCAVKRLKIDNKDPAAAEIELDEDDMELYGGAIEEQQNDDDEQIDESLQFRELDRLRNVGPVKSMCVGRPNYMSNDLVDAKRRDPVFDLVTASGHGKNGALCVHQRSLRPEIITSSLLEGAEQLWAVGRKENESHKYLIVSRVRSTLILELGEELVELEEQLFVTGEPTVAAGELSQGALAVQVTSTCIALVTDGQQMQEVHIDSNFPVIQASIVDPYVALLTQNGRLLLYELVMEPYVQLREVDISATSFATWHATAQNLTQLTSISIYADASEIMKFAAAEKSMGGGGGGDGEVSTAENAMMKKEQHEEAILLHGEDDDFLYGDEDETIMEQNFPVENGEATIKQSNTRKRKRLGHDAIQSSRGGEQSDAIDPTRTFSSISHWLIVSHENGRLSIHSLPEMEVVYQIGRFSNVPELLVDLTVEEEEKERKAKAQQAAKEASVPTDEAEQLNTEMKQLCERVLEAQIVGMGINQAHPILMAIVDEQVVLYEMFSSSNPIPGHLGISFRKLPHFICLRTSSHLNSDGKRAPFEMKINNGKRFSLIHPFERVSSVNNGVMIVGAVPTLLVYGAWGGMQTHQMTVDGPIKAFTPFNNENVLHGIVYMTQHKSELRIARMHPDFDYEMPYPVKKIEVGRTIHHVRYLMNSDVYAVVSSIPKPSNKIWVVMNDDKQEEIHEKDENFVLPAPPKYTLNLFSSQDWAAVPNTEISFEDMEAVTACEDVALKSESTISGLETLLAMGTVNNYGEEVLVRGRIILCEVIEVVPEPDQPTSNRKIKVLFDKEQKGPVTGLCAINGLLLCGMGQKVFIWQFKDNDLMGISFLDMHYYVYQLHSLRTIAIACDARESMSLIRFQEDNKAMSIASRDDRKCAQPPMASQLVVDGAHVGFLLSDETGNITMFNYAPEAPESNGGERLTVRAAINIGTNINAFVRLRGHTSLLQLNNEDEKEAIEQRMTTVFASLDGSFGFVRPLTEKSYRRLHFLQTFIGSVTPQIAGLHIKGSRSAKPSQPIVNGRNARNLIDGDVVEQYLHLSLYDKTDLARRLGVGRYHIIDDLMQLRRMAFYY.

Positions 736-765 (KQSNTRKRKRLGHDAIQSSRGGEQSDAIDP) are disordered.

Belongs to the CPSF1 family. CPSF is a heterotetramer composed of four distinct subunits 160 (cpsf-1), 100 (cpsf-2), 70 (cpsf-3), and 30 kDa (cpsf-4).

It is found in the nucleus. In terms of biological role, CPSF plays a key role in pre-mRNA 3'-end formation, recognizing the AAUAAA signal sequence and interacting with poly(A)polymerase and other factors to bring about cleavage and poly(A) addition. This subunit is involved in the RNA recognition step of the polyadenylation reaction. The protein is Probable cleavage and polyadenylation specificity factor subunit 1 (cpsf-1) of Caenorhabditis elegans.